Here is a 165-residue protein sequence, read N- to C-terminus: Xanthine-guanine phosphoribosyltransferase (165 aa).

5-phospho-alpha-D-ribose 1-diphosphate contacts are provided by residues 41–42 and 98–106; these read RG and DDLTDTGKT. Aspartate 99 contacts Mg(2+). Guanine contacts are provided by aspartate 102 and isoleucine 145. Xanthine contacts are provided by aspartate 102 and isoleucine 145. GMP is bound by residues 102-106 and 144-145; these read DTGKT and WI.

This sequence belongs to the purine/pyrimidine phosphoribosyltransferase family. XGPT subfamily. As to quaternary structure, homotetramer. Mg(2+) is required as a cofactor.

The protein localises to the cell inner membrane. It catalyses the reaction GMP + diphosphate = guanine + 5-phospho-alpha-D-ribose 1-diphosphate. The enzyme catalyses XMP + diphosphate = xanthine + 5-phospho-alpha-D-ribose 1-diphosphate. It carries out the reaction IMP + diphosphate = hypoxanthine + 5-phospho-alpha-D-ribose 1-diphosphate. The protein operates within purine metabolism; GMP biosynthesis via salvage pathway; GMP from guanine: step 1/1. It participates in purine metabolism; XMP biosynthesis via salvage pathway; XMP from xanthine: step 1/1. Functionally, purine salvage pathway enzyme that catalyzes the transfer of the ribosyl-5-phosphate group from 5-phospho-alpha-D-ribose 1-diphosphate (PRPP) to the N9 position of the 6-oxopurines guanine and xanthine to form the corresponding ribonucleotides GMP (guanosine 5'-monophosphate) and XMP (xanthosine 5'-monophosphate), with the release of PPi. To a lesser extent, also acts on hypoxanthine. The chain is Xanthine-guanine phosphoribosyltransferase from Brucella anthropi (strain ATCC 49188 / DSM 6882 / CCUG 24695 / JCM 21032 / LMG 3331 / NBRC 15819 / NCTC 12168 / Alc 37) (Ochrobactrum anthropi).